Consider the following 142-residue polypeptide: Universal stress protein D (142 aa).

It belongs to the universal stress protein A family.

It is found in the cytoplasm. In terms of biological role, required for resistance to DNA-damaging agents. The sequence is that of Universal stress protein D (uspD) from Escherichia coli (strain K12).